A 234-amino-acid chain; its full sequence is Octanoyltransferase (234 aa).

A BPL/LPL catalytic domain is found at 42–226 (PDTPDEFWVV…ELASLIGYET (185 aa)). Residues 81–88 (RGGQVTYH), 157–159 (SLG), and 170–172 (GLA) contribute to the substrate site. Cys-188 (acyl-thioester intermediate) is an active-site residue.

It belongs to the LipB family.

Its subcellular location is the cytoplasm. The catalysed reaction is octanoyl-[ACP] + L-lysyl-[protein] = N(6)-octanoyl-L-lysyl-[protein] + holo-[ACP] + H(+). Its pathway is protein modification; protein lipoylation via endogenous pathway; protein N(6)-(lipoyl)lysine from octanoyl-[acyl-carrier-protein]: step 1/2. Functionally, catalyzes the transfer of endogenously produced octanoic acid from octanoyl-acyl-carrier-protein onto the lipoyl domains of lipoate-dependent enzymes. Lipoyl-ACP can also act as a substrate although octanoyl-ACP is likely to be the physiological substrate. The chain is Octanoyltransferase from Aeromonas hydrophila subsp. hydrophila (strain ATCC 7966 / DSM 30187 / BCRC 13018 / CCUG 14551 / JCM 1027 / KCTC 2358 / NCIMB 9240 / NCTC 8049).